We begin with the raw amino-acid sequence, 481 residues long: Glycogen synthase (481 aa).

K15 lines the ADP-alpha-D-glucose pocket.

The protein belongs to the glycosyltransferase 1 family. Bacterial/plant glycogen synthase subfamily.

It catalyses the reaction [(1-&gt;4)-alpha-D-glucosyl](n) + ADP-alpha-D-glucose = [(1-&gt;4)-alpha-D-glucosyl](n+1) + ADP + H(+). It participates in glycan biosynthesis; glycogen biosynthesis. Functionally, synthesizes alpha-1,4-glucan chains using ADP-glucose. This Thermosipho melanesiensis (strain DSM 12029 / CIP 104789 / BI429) protein is Glycogen synthase.